The following is a 198-amino-acid chain: Recombination protein RecR (198 aa).

A C4-type zinc finger spans residues 57–72; that stretch reads CSICGNLTDDDPCHIC. The 96-residue stretch at 80-175 folds into the Toprim domain; that stretch reads TTILVVEDAK…KVTRLARGLA (96 aa).

The protein belongs to the RecR family.

Its function is as follows. May play a role in DNA repair. It seems to be involved in an RecBC-independent recombinational process of DNA repair. It may act with RecF and RecO. The sequence is that of Recombination protein RecR from Streptococcus pyogenes serotype M5 (strain Manfredo).